The following is a 236-amino-acid chain: Potassium/proton antiporter CemA (236 aa).

4 helical membrane-spanning segments follow: residues 18-38 (YIIS…FLVL), 114-134 (IAHV…LINA), 161-181 (LILF…KILI), and 196-216 (FIFL…KYWI).

The protein belongs to the CemA family.

The protein resides in the plastid. It is found in the chloroplast inner membrane. The enzyme catalyses K(+)(in) + H(+)(out) = K(+)(out) + H(+)(in). Functionally, contributes to K(+)/H(+) antiport activity by supporting proton efflux to control proton extrusion and homeostasis in chloroplasts in a light-dependent manner to modulate photosynthesis. Prevents excessive induction of non-photochemical quenching (NPQ) under continuous-light conditions. Indirectly promotes efficient inorganic carbon uptake into chloroplasts. The polypeptide is Potassium/proton antiporter CemA (Mesostigma viride (Green alga)).